A 276-amino-acid chain; its full sequence is Secreted RxLR effector protein 85 (276 aa).

Positions 1–27 (MRYCAFRLGLFFIGYSCCVLLSTPTLA) are cleaved as a signal peptide. The short motif at 110 to 113 (RQLR) is the RxLR element.

It belongs to the RxLR effector family.

It is found in the secreted. The protein localises to the host cell membrane. In terms of biological role, secreted effector that partially suppresses the host cell death induced by cell death-inducing proteins. This is Secreted RxLR effector protein 85 from Plasmopara viticola (Downy mildew of grapevine).